The sequence spans 340 residues: UDP-N-acetylenolpyruvoylglucosamine reductase (340 aa).

Positions 11 to 181 (ISVKAKKIIS…VAIGLKLKKK (171 aa)) constitute an FAD-binding PCMH-type domain. Residue arginine 156 is part of the active site. Serine 227 acts as the Proton donor in catalysis. Residue glutamate 323 is part of the active site.

It belongs to the MurB family. It depends on FAD as a cofactor.

It localises to the cytoplasm. It carries out the reaction UDP-N-acetyl-alpha-D-muramate + NADP(+) = UDP-N-acetyl-3-O-(1-carboxyvinyl)-alpha-D-glucosamine + NADPH + H(+). Its pathway is cell wall biogenesis; peptidoglycan biosynthesis. Cell wall formation. This is UDP-N-acetylenolpyruvoylglucosamine reductase from Wigglesworthia glossinidia brevipalpis.